A 354-amino-acid chain; its full sequence is Methionine import ATP-binding protein MetN (354 aa).

The ABC transporter domain occupies L8–I250. ATP is bound at residue G42–S49.

This sequence belongs to the ABC transporter superfamily. Methionine importer (TC 3.A.1.24) family. In terms of assembly, the complex is composed of two ATP-binding proteins (MetN), two transmembrane proteins (MetI) and a solute-binding protein (MetQ).

Its subcellular location is the cell membrane. The enzyme catalyses L-methionine(out) + ATP + H2O = L-methionine(in) + ADP + phosphate + H(+). It carries out the reaction D-methionine(out) + ATP + H2O = D-methionine(in) + ADP + phosphate + H(+). In terms of biological role, part of the ABC transporter complex MetNIQ involved in methionine import. Responsible for energy coupling to the transport system. This chain is Methionine import ATP-binding protein MetN, found in Streptococcus pyogenes serotype M18 (strain MGAS8232).